Reading from the N-terminus, the 385-residue chain is Aliphatic amidase expression-regulating protein (385 aa).

Homodimer. Forms a complex with AmiR.

Functionally, negatively regulates the expression of the aliphatic amidase operon. AmiC functions by inhibiting the action of AmiR at the protein level. It exhibits protein kinase activity. This is Aliphatic amidase expression-regulating protein (amiC) from Pseudomonas aeruginosa (strain ATCC 15692 / DSM 22644 / CIP 104116 / JCM 14847 / LMG 12228 / 1C / PRS 101 / PAO1).